A 313-amino-acid chain; its full sequence is 4-hydroxyproline 2-epimerase (313 aa).

A disordered region spans residues 1–23; it reads MHVIDSHTGGEPTRVILSGGPHL. The Proton acceptor role is filled by cysteine 85. Residues 86-87, histidine 205, and aspartate 231 each bind substrate; that span reads GH. The Proton donor role is filled by cysteine 235. Position 236–237 (236–237) interacts with substrate; sequence GT.

It belongs to the proline racemase family.

It carries out the reaction trans-4-hydroxy-L-proline = cis-4-hydroxy-D-proline. Its function is as follows. Catalyzes the epimerization of trans-4-hydroxy-L-proline (t4LHyp) to cis-4-hydroxy-D-proline (c4DHyp). Is likely involved in a degradation pathway that converts t4LHyp to alpha-ketoglutarate. Displays no proline racemase activity. The sequence is that of 4-hydroxyproline 2-epimerase from Ruegeria pomeroyi (strain ATCC 700808 / DSM 15171 / DSS-3) (Silicibacter pomeroyi).